We begin with the raw amino-acid sequence, 53 residues long: Large ribosomal subunit protein bL33A (53 aa).

Belongs to the bacterial ribosomal protein bL33 family.

The chain is Large ribosomal subunit protein bL33A (rpmG1) from Mycoplasma genitalium (strain ATCC 33530 / DSM 19775 / NCTC 10195 / G37) (Mycoplasmoides genitalium).